We begin with the raw amino-acid sequence, 189 residues long: MRVLGVDPGLTRCGFGVVDGGNGRTVTPVAVDVVRTPADLELSSRLLRISEAAESWIDLHRPEVVAIERVFAQHNVRTAMGTAQAGGVVALAAARRGIPVCFHTPSEVKAAVTGSGSADKAQVTAMVTRILKLAAAPRPADAADALALAICHCWRAPMIERMARAEAAAAEQKRRYQARLAEVKKAGTR.

Active-site residues include Asp7, Glu68, and Asp141. Asp7, Glu68, and Asp141 together coordinate Mg(2+).

The protein belongs to the RuvC family. Homodimer which binds Holliday junction (HJ) DNA. The HJ becomes 2-fold symmetrical on binding to RuvC with unstacked arms; it has a different conformation from HJ DNA in complex with RuvA. In the full resolvosome a probable DNA-RuvA(4)-RuvB(12)-RuvC(2) complex forms which resolves the HJ. Mg(2+) serves as cofactor.

It is found in the cytoplasm. It carries out the reaction Endonucleolytic cleavage at a junction such as a reciprocal single-stranded crossover between two homologous DNA duplexes (Holliday junction).. The RuvA-RuvB-RuvC complex processes Holliday junction (HJ) DNA during genetic recombination and DNA repair. Endonuclease that resolves HJ intermediates. Cleaves cruciform DNA by making single-stranded nicks across the HJ at symmetrical positions within the homologous arms, yielding a 5'-phosphate and a 3'-hydroxyl group; requires a central core of homology in the junction. The consensus cleavage sequence is 5'-(A/T)TT(C/G)-3'. Cleavage occurs on the 3'-side of the TT dinucleotide at the point of strand exchange. HJ branch migration catalyzed by RuvA-RuvB allows RuvC to scan DNA until it finds its consensus sequence, where it cleaves and resolves the cruciform DNA. The chain is Crossover junction endodeoxyribonuclease RuvC from Rhodococcus opacus (strain B4).